The chain runs to 297 residues: Homoserine kinase (297 aa).

82 to 92 (PLTRGLGSSAS) serves as a coordination point for ATP.

The protein belongs to the GHMP kinase family. Homoserine kinase subfamily.

It is found in the cytoplasm. It carries out the reaction L-homoserine + ATP = O-phospho-L-homoserine + ADP + H(+). It functions in the pathway amino-acid biosynthesis; L-threonine biosynthesis; L-threonine from L-aspartate: step 4/5. Catalyzes the ATP-dependent phosphorylation of L-homoserine to L-homoserine phosphate. The chain is Homoserine kinase from Bacillus cereus (strain ATCC 14579 / DSM 31 / CCUG 7414 / JCM 2152 / NBRC 15305 / NCIMB 9373 / NCTC 2599 / NRRL B-3711).